A 1238-amino-acid polypeptide reads, in one-letter code: ATP-dependent helicase/nuclease subunit A (1238 aa).

Residues 12 to 490 (VSWTDDQWKA…IDLNANFRSR (479 aa)) enclose the UvrD-like helicase ATP-binding domain. 33 to 40 (AAAGSGKT) serves as a coordination point for ATP. One can recognise a UvrD-like helicase C-terminal domain in the interval 510–818 (GEILYDDNAS…RLVTIHSSKG (309 aa)).

This sequence belongs to the helicase family. AddA subfamily. As to quaternary structure, heterodimer of AddA and AddB/RexB. Mg(2+) is required as a cofactor.

It carries out the reaction Couples ATP hydrolysis with the unwinding of duplex DNA by translocating in the 3'-5' direction.. The catalysed reaction is ATP + H2O = ADP + phosphate + H(+). The heterodimer acts as both an ATP-dependent DNA helicase and an ATP-dependent, dual-direction single-stranded exonuclease. Recognizes the chi site generating a DNA molecule suitable for the initiation of homologous recombination. The AddA nuclease domain is required for chi fragment generation; this subunit has the helicase and 3' -&gt; 5' nuclease activities. The chain is ATP-dependent helicase/nuclease subunit A from Lysinibacillus sphaericus (strain C3-41).